Here is a 582-residue protein sequence, read N- to C-terminus: Aspartate--tRNA(Asp/Asn) ligase (582 aa).

Glutamate 177 lines the L-aspartate pocket. Residues 201–204 form an aspartate region; it reads QLFK. Residue arginine 223 coordinates L-aspartate. Residues 223 to 225 and glutamine 232 contribute to the ATP site; that span reads RDE. Histidine 447 lines the L-aspartate pocket. Glutamate 481 contacts ATP. Arginine 488 contributes to the L-aspartate binding site. ATP is bound at residue 533-536; that stretch reads GLDR.

This sequence belongs to the class-II aminoacyl-tRNA synthetase family. Type 1 subfamily. In terms of assembly, homodimer.

The protein resides in the cytoplasm. It carries out the reaction tRNA(Asx) + L-aspartate + ATP = L-aspartyl-tRNA(Asx) + AMP + diphosphate. Aspartyl-tRNA synthetase with relaxed tRNA specificity since it is able to aspartylate not only its cognate tRNA(Asp) but also tRNA(Asn). Reaction proceeds in two steps: L-aspartate is first activated by ATP to form Asp-AMP and then transferred to the acceptor end of tRNA(Asp/Asn). The sequence is that of Aspartate--tRNA(Asp/Asn) ligase from Chlamydia muridarum (strain MoPn / Nigg).